The primary structure comprises 189 residues: Peptidyl-tRNA hydrolase (189 aa).

Tyr-15 serves as a coordination point for tRNA. His-20 acts as the Proton acceptor in catalysis. Residues Phe-66, Asn-68, and Asn-114 each contribute to the tRNA site.

This sequence belongs to the PTH family. In terms of assembly, monomer.

It localises to the cytoplasm. It carries out the reaction an N-acyl-L-alpha-aminoacyl-tRNA + H2O = an N-acyl-L-amino acid + a tRNA + H(+). Its function is as follows. Hydrolyzes ribosome-free peptidyl-tRNAs (with 1 or more amino acids incorporated), which drop off the ribosome during protein synthesis, or as a result of ribosome stalling. Catalyzes the release of premature peptidyl moieties from peptidyl-tRNA molecules trapped in stalled 50S ribosomal subunits, and thus maintains levels of free tRNAs and 50S ribosomes. The chain is Peptidyl-tRNA hydrolase from Streptococcus thermophilus (strain CNRZ 1066).